The chain runs to 218 residues: Serine/threonine-protein phosphatase 2 (218 aa).

4 residues coordinate Mn(2+): Asp-22, His-24, Asp-51, and Asn-77. The Proton donor role is filled by His-78. His-187 serves as a coordination point for Mn(2+).

This sequence belongs to the PPP phosphatase family. PP-1 subfamily. The cofactor is Mn(2+).

It catalyses the reaction O-phospho-L-seryl-[protein] + H2O = L-seryl-[protein] + phosphate. The enzyme catalyses O-phospho-L-threonyl-[protein] + H2O = L-threonyl-[protein] + phosphate. With respect to regulation, inhibited by cadmium, copper, zinc when added activity but with less efficiency. In terms of biological role, can hydrolyze phosphorylated Ser-, Thr- or Tyr-substrates in vitro. The natural substrate is unknown. The chain is Serine/threonine-protein phosphatase 2 (pphB) from Salmonella typhimurium (strain LT2 / SGSC1412 / ATCC 700720).